Reading from the N-terminus, the 448-residue chain is MGLSPVNIFKPFGLGRAKAVIAAVSGGSDSLGLLFLLKDYLSTLESPPVLIAVTVDHKLRAESALEAENVGLLCQKHGIMHCVLSWDDPKPAHGLAAAARTARYRLLVQAARDAGAGFIVTGHTENDQIETFLMRKARSGHCEARGLAAMSPRSLLEGSVELARPLLTVSRQALRDELTRRGIAWVDDPSNANIDYERPRVRLGVAAEADGQEVLEQIAQAGAARERDNAALVEALADPATLGVDAAGMMFLNADCYAALSPGARQLFSGLLASIAGGRRFLPGDGERRRIERMLSGQDAPRRLTVFGALIERGEKGAPHRFRRERRNLPKLDLVPGQHIVWDGRFCFFNSGGRSFEIAPPGRQELIDFLKNSGRDIESRRCEALLISPALYEGGKLAFVPFLPGAEWPQGVHIERHFAIFDHVLPGHDFALAQAVEARLGRACAEIS.

Residue 25–30 (SGGSDS) participates in ATP binding.

This sequence belongs to the tRNA(Ile)-lysidine synthase family.

It is found in the cytoplasm. The catalysed reaction is cytidine(34) in tRNA(Ile2) + L-lysine + ATP = lysidine(34) in tRNA(Ile2) + AMP + diphosphate + H(+). Functionally, ligates lysine onto the cytidine present at position 34 of the AUA codon-specific tRNA(Ile) that contains the anticodon CAU, in an ATP-dependent manner. Cytidine is converted to lysidine, thus changing the amino acid specificity of the tRNA from methionine to isoleucine. In Brucella abortus (strain S19), this protein is tRNA(Ile)-lysidine synthase.